Here is a 300-residue protein sequence, read N- to C-terminus: 4-hydroxy-tetrahydrodipicolinate synthase (300 aa).

Position 45 (Thr45) interacts with pyruvate. Tyr140 functions as the Proton donor/acceptor in the catalytic mechanism. Lys169 functions as the Schiff-base intermediate with substrate in the catalytic mechanism. Ile210 is a pyruvate binding site.

It belongs to the DapA family. Homotetramer; dimer of dimers.

It is found in the cytoplasm. The enzyme catalyses L-aspartate 4-semialdehyde + pyruvate = (2S,4S)-4-hydroxy-2,3,4,5-tetrahydrodipicolinate + H2O + H(+). It functions in the pathway amino-acid biosynthesis; L-lysine biosynthesis via DAP pathway; (S)-tetrahydrodipicolinate from L-aspartate: step 3/4. Its function is as follows. Catalyzes the condensation of (S)-aspartate-beta-semialdehyde [(S)-ASA] and pyruvate to 4-hydroxy-tetrahydrodipicolinate (HTPA). This chain is 4-hydroxy-tetrahydrodipicolinate synthase, found in Helicobacter pylori (strain P12).